The following is a 164-amino-acid chain: Lipoprotein signal peptidase (164 aa).

A run of 4 helical transmembrane segments spans residues 8-28 (IVAA…LLFV), 39-59 (VTPF…GWFQ), 64-84 (VGAT…AIWM), and 91-111 (LATI…IDRF). Active-site residues include D118 and D140. Residues 131–151 (YSWYVFNLADVAIVAGVIALL) traverse the membrane as a helical segment.

It belongs to the peptidase A8 family.

The protein resides in the cell inner membrane. It catalyses the reaction Release of signal peptides from bacterial membrane prolipoproteins. Hydrolyzes -Xaa-Yaa-Zaa-|-(S,diacylglyceryl)Cys-, in which Xaa is hydrophobic (preferably Leu), and Yaa (Ala or Ser) and Zaa (Gly or Ala) have small, neutral side chains.. Its pathway is protein modification; lipoprotein biosynthesis (signal peptide cleavage). Functionally, this protein specifically catalyzes the removal of signal peptides from prolipoproteins. The chain is Lipoprotein signal peptidase from Nitrobacter hamburgensis (strain DSM 10229 / NCIMB 13809 / X14).